A 452-amino-acid chain; its full sequence is Phosphoglucosamine mutase (452 aa).

Ser103 acts as the Phosphoserine intermediate in catalysis. Residues Ser103, Asp243, Asp245, and Asp247 each coordinate Mg(2+). Residue Ser103 is modified to Phosphoserine.

Belongs to the phosphohexose mutase family. Mg(2+) is required as a cofactor. Post-translationally, activated by phosphorylation.

It carries out the reaction alpha-D-glucosamine 1-phosphate = D-glucosamine 6-phosphate. Functionally, catalyzes the conversion of glucosamine-6-phosphate to glucosamine-1-phosphate. This Exiguobacterium sp. (strain ATCC BAA-1283 / AT1b) protein is Phosphoglucosamine mutase.